A 159-amino-acid chain; its full sequence is Ribosome-binding factor A (159 aa).

Residues 127–159 (TYAGEADPYRRPAVDDAGDSADDADPAEDERPS) are disordered. Acidic residues predominate over residues 142-159 (DAGDSADDADPAEDERPS).

This sequence belongs to the RbfA family. Monomer. Binds 30S ribosomal subunits, but not 50S ribosomal subunits or 70S ribosomes.

It localises to the cytoplasm. Functionally, one of several proteins that assist in the late maturation steps of the functional core of the 30S ribosomal subunit. Associates with free 30S ribosomal subunits (but not with 30S subunits that are part of 70S ribosomes or polysomes). Required for efficient processing of 16S rRNA. May interact with the 5'-terminal helix region of 16S rRNA. This is Ribosome-binding factor A from Beutenbergia cavernae (strain ATCC BAA-8 / DSM 12333 / CCUG 43141 / JCM 11478 / NBRC 16432 / NCIMB 13614 / HKI 0122).